Reading from the N-terminus, the 162-residue chain is NRR repressor homolog 3 (162 aa).

A disordered region spans residues 1 to 80; the sequence is MDPTMPTPHT…GHEEEARDED (80 aa). Polar residues predominate over residues 7-24; it reads TPHTISGTSPFPRNSSTA. Positions 37–46 are enriched in basic residues; sequence PRHRRSRKRD. The span at 69–80 shows a compositional bias: basic and acidic residues; it reads GHGHEEEARDED.

This sequence belongs to the NPR1-interactor family. As to quaternary structure, interacts with NPR1/NH1. Interacts with NPR3/NH3.

Its subcellular location is the nucleus. Binds to and represses NPR1/NH1-mediated transcriptional activation of LG2 in vitro. The sequence is that of NRR repressor homolog 3 from Oryza sativa subsp. japonica (Rice).